We begin with the raw amino-acid sequence, 521 residues long: uncharacterized protein (521 aa).

Transmembrane regions (helical) follow at residues 103 to 123 (NLML…VPMP), 136 to 156 (FWFF…LWIT), 177 to 197 (YILF…FTAW), 200 to 220 (ITFT…GISF), 259 to 279 (AYAH…VYIV), 299 to 319 (IMYV…SSWI), 327 to 346 (YALV…VYVR), 358 to 378 (FVLV…LITM), 411 to 431 (CVAS…LHFG), and 450 to 470 (FKLT…ASYL).

The protein localises to the membrane. This is an uncharacterized protein from Schizosaccharomyces pombe (strain 972 / ATCC 24843) (Fission yeast).